The chain runs to 314 residues: Beta-lactamase (314 aa).

The segment at residues 1 to 39 (MHPSTSRPSRRTLLTATAGAALAAATLVPGTAHASSGGR) is a signal peptide (tat-type signal). The interval 31–50 (TAHASSGGRGHGSGSVSDAE) is disordered. The active-site Acyl-ester intermediate is serine 89. 259–261 (KTG) contributes to the substrate binding site.

It belongs to the class-A beta-lactamase family. Post-translationally, predicted to be exported by the Tat system. The position of the signal peptide cleavage has been experimentally proven.

The enzyme catalyses a beta-lactam + H2O = a substituted beta-amino acid. This is Beta-lactamase from Streptomyces albus G.